A 413-amino-acid chain; its full sequence is Multifunctional CCA protein (413 aa).

The ATP site is built by glycine 8 and arginine 11. Residues glycine 8 and arginine 11 each contribute to the CTP site. Residues aspartate 21 and aspartate 23 each coordinate Mg(2+). ATP-binding residues include arginine 91, arginine 137, and arginine 140. CTP-binding residues include arginine 91, arginine 137, and arginine 140. Residues 228–329 (TGIHTLMVLA…LKVFDKADAW (102 aa)) form the HD domain.

This sequence belongs to the tRNA nucleotidyltransferase/poly(A) polymerase family. Bacterial CCA-adding enzyme type 1 subfamily. In terms of assembly, monomer. Can also form homodimers and oligomers. The cofactor is Mg(2+). Requires Ni(2+) as cofactor.

It carries out the reaction a tRNA precursor + 2 CTP + ATP = a tRNA with a 3' CCA end + 3 diphosphate. The catalysed reaction is a tRNA with a 3' CCA end + 2 CTP + ATP = a tRNA with a 3' CCACCA end + 3 diphosphate. Its function is as follows. Catalyzes the addition and repair of the essential 3'-terminal CCA sequence in tRNAs without using a nucleic acid template. Adds these three nucleotides in the order of C, C, and A to the tRNA nucleotide-73, using CTP and ATP as substrates and producing inorganic pyrophosphate. tRNA 3'-terminal CCA addition is required both for tRNA processing and repair. Also involved in tRNA surveillance by mediating tandem CCA addition to generate a CCACCA at the 3' terminus of unstable tRNAs. While stable tRNAs receive only 3'-terminal CCA, unstable tRNAs are marked with CCACCA and rapidly degraded. The protein is Multifunctional CCA protein of Aeromonas salmonicida (strain A449).